Reading from the N-terminus, the 288-residue chain is Ribosomal RNA small subunit methyltransferase A (288 aa).

Residues 1-14 (MSKNQGGNKHQGGS) are compositionally biased toward polar residues. Positions 1–21 (MSKNQGGNKHQGGSKTHLGHR) are disordered. Residues asparagine 29, leucine 31, glycine 56, glutamate 77, aspartate 102, and asparagine 122 each contribute to the S-adenosyl-L-methionine site.

This sequence belongs to the class I-like SAM-binding methyltransferase superfamily. rRNA adenine N(6)-methyltransferase family. RsmA subfamily.

It localises to the cytoplasm. The catalysed reaction is adenosine(1518)/adenosine(1519) in 16S rRNA + 4 S-adenosyl-L-methionine = N(6)-dimethyladenosine(1518)/N(6)-dimethyladenosine(1519) in 16S rRNA + 4 S-adenosyl-L-homocysteine + 4 H(+). Functionally, specifically dimethylates two adjacent adenosines (A1518 and A1519) in the loop of a conserved hairpin near the 3'-end of 16S rRNA in the 30S particle. May play a critical role in biogenesis of 30S subunits. The polypeptide is Ribosomal RNA small subunit methyltransferase A (Idiomarina loihiensis (strain ATCC BAA-735 / DSM 15497 / L2-TR)).